A 509-amino-acid polypeptide reads, in one-letter code: Ribonuclease Y (509 aa).

Residues 3-23 form a helical membrane-spanning segment; that stretch reads IIFSSIFAGFILGFLIRVFLG. Residues 197-257 enclose the KH domain; sequence TVASVELPND…IRKELAKRTL (61 aa). The 96-residue stretch at 323–418 folds into the HD domain; sequence VLSHSKETAI…VQIADAISAS (96 aa).

This sequence belongs to the RNase Y family.

Its subcellular location is the cell membrane. Endoribonuclease that initiates mRNA decay. This chain is Ribonuclease Y, found in Borreliella afzelii (strain PKo) (Borrelia afzelii).